A 150-amino-acid chain; its full sequence is D-aminoacyl-tRNA deacylase (150 aa).

The short motif at Gly-133–Pro-134 is the Gly-cisPro motif, important for rejection of L-amino acids element.

The protein belongs to the DTD family. Homodimer.

Its subcellular location is the cytoplasm. The enzyme catalyses glycyl-tRNA(Ala) + H2O = tRNA(Ala) + glycine + H(+). The catalysed reaction is a D-aminoacyl-tRNA + H2O = a tRNA + a D-alpha-amino acid + H(+). In terms of biological role, an aminoacyl-tRNA editing enzyme that deacylates mischarged D-aminoacyl-tRNAs. Also deacylates mischarged glycyl-tRNA(Ala), protecting cells against glycine mischarging by AlaRS. Acts via tRNA-based rather than protein-based catalysis; rejects L-amino acids rather than detecting D-amino acids in the active site. By recycling D-aminoacyl-tRNA to D-amino acids and free tRNA molecules, this enzyme counteracts the toxicity associated with the formation of D-aminoacyl-tRNA entities in vivo and helps enforce protein L-homochirality. In Kocuria rhizophila (strain ATCC 9341 / DSM 348 / NBRC 103217 / DC2201), this protein is D-aminoacyl-tRNA deacylase.